Consider the following 324-residue polypeptide: Beta-ketoacyl-[acyl-carrier-protein] synthase III (324 aa).

Catalysis depends on residues cysteine 112 and histidine 249. Positions 250 to 254 are ACP-binding; it reads QANIR. Asparagine 279 is a catalytic residue.

This sequence belongs to the thiolase-like superfamily. FabH family. As to quaternary structure, homodimer.

It localises to the cytoplasm. The catalysed reaction is malonyl-[ACP] + acetyl-CoA + H(+) = 3-oxobutanoyl-[ACP] + CO2 + CoA. Its pathway is lipid metabolism; fatty acid biosynthesis. Functionally, catalyzes the condensation reaction of fatty acid synthesis by the addition to an acyl acceptor of two carbons from malonyl-ACP. Catalyzes the first condensation reaction which initiates fatty acid synthesis and may therefore play a role in governing the total rate of fatty acid production. Possesses both acetoacetyl-ACP synthase and acetyl transacylase activities. Its substrate specificity determines the biosynthesis of branched-chain and/or straight-chain of fatty acids. In Streptococcus sanguinis (strain SK36), this protein is Beta-ketoacyl-[acyl-carrier-protein] synthase III.